The sequence spans 362 residues: MLLELALWLGQDIRGFNVFGYITLRTVLAALTALAISLTAGPGVIRWLAAKKIGQAVRDDGPKSHLTKAGTPTMGGALILIAIGITILLWGDLRNAYVWVTLLVTLGFGAVGWVDDWRKVVHRDPKGLASRWKYFWTSAIALGASIFLGLSATTPAETELIVPFFKAVAYPLGVYGFIALTYFVINGTSHAVNLTDGLDGLAIMPTVMVAGALAIFAYVAGHAGFSKYLGVPYIAGAGELAVFCGAICGAGLGFLWFNAYPAEVFMGDVGALALGAALGTIAVVVRQEIVLFIMGGLFVAETLSVMVQVLYFKASGGKRIFRMAPLHHHYELSGWKETQVVVRFWIITLMLVLFGLSTLKLR.

10 consecutive transmembrane segments (helical) span residues 18-38 (VFGY…AISL), 73-93 (TMGG…WGDL), 97-117 (YVWV…VDDW), 134-154 (YFWT…SATT), 160-180 (LIVP…FIAL), 200-220 (GLAI…AYVA), 237-257 (AGEL…FLWF), 264-284 (VFMG…IAVV), 289-309 (IVLF…MVQV), and 339-359 (QVVV…LSTL).

It belongs to the glycosyltransferase 4 family. MraY subfamily. Requires Mg(2+) as cofactor.

The protein resides in the cell inner membrane. The catalysed reaction is UDP-N-acetyl-alpha-D-muramoyl-L-alanyl-gamma-D-glutamyl-meso-2,6-diaminopimeloyl-D-alanyl-D-alanine + di-trans,octa-cis-undecaprenyl phosphate = di-trans,octa-cis-undecaprenyl diphospho-N-acetyl-alpha-D-muramoyl-L-alanyl-D-glutamyl-meso-2,6-diaminopimeloyl-D-alanyl-D-alanine + UMP. It functions in the pathway cell wall biogenesis; peptidoglycan biosynthesis. Its function is as follows. Catalyzes the initial step of the lipid cycle reactions in the biosynthesis of the cell wall peptidoglycan: transfers peptidoglycan precursor phospho-MurNAc-pentapeptide from UDP-MurNAc-pentapeptide onto the lipid carrier undecaprenyl phosphate, yielding undecaprenyl-pyrophosphoryl-MurNAc-pentapeptide, known as lipid I. The chain is Phospho-N-acetylmuramoyl-pentapeptide-transferase from Azoarcus sp. (strain BH72).